The primary structure comprises 570 residues: Proline--tRNA ligase (570 aa).

This sequence belongs to the class-II aminoacyl-tRNA synthetase family. ProS type 1 subfamily. As to quaternary structure, homodimer.

It localises to the cytoplasm. The enzyme catalyses tRNA(Pro) + L-proline + ATP = L-prolyl-tRNA(Pro) + AMP + diphosphate. Its function is as follows. Catalyzes the attachment of proline to tRNA(Pro) in a two-step reaction: proline is first activated by ATP to form Pro-AMP and then transferred to the acceptor end of tRNA(Pro). As ProRS can inadvertently accommodate and process non-cognate amino acids such as alanine and cysteine, to avoid such errors it has two additional distinct editing activities against alanine. One activity is designated as 'pretransfer' editing and involves the tRNA(Pro)-independent hydrolysis of activated Ala-AMP. The other activity is designated 'posttransfer' editing and involves deacylation of mischarged Ala-tRNA(Pro). The misacylated Cys-tRNA(Pro) is not edited by ProRS. The protein is Proline--tRNA ligase of Clostridium tetani (strain Massachusetts / E88).